A 379-amino-acid polypeptide reads, in one-letter code: UDP-4-amino-4-deoxy-L-arabinose--oxoglutarate aminotransferase (379 aa).

Lys182 bears the N6-(pyridoxal phosphate)lysine mark.

This sequence belongs to the DegT/DnrJ/EryC1 family. ArnB subfamily. Homodimer. Requires pyridoxal 5'-phosphate as cofactor.

The enzyme catalyses UDP-4-amino-4-deoxy-beta-L-arabinose + 2-oxoglutarate = UDP-beta-L-threo-pentopyranos-4-ulose + L-glutamate. It functions in the pathway nucleotide-sugar biosynthesis; UDP-4-deoxy-4-formamido-beta-L-arabinose biosynthesis; UDP-4-deoxy-4-formamido-beta-L-arabinose from UDP-alpha-D-glucuronate: step 2/3. It participates in bacterial outer membrane biogenesis; lipopolysaccharide biosynthesis. In terms of biological role, catalyzes the conversion of UDP-4-keto-arabinose (UDP-Ara4O) to UDP-4-amino-4-deoxy-L-arabinose (UDP-L-Ara4N). The modified arabinose is attached to lipid A and is required for resistance to polymyxin and cationic antimicrobial peptides. The chain is UDP-4-amino-4-deoxy-L-arabinose--oxoglutarate aminotransferase from Sodalis glossinidius (strain morsitans).